The following is a 189-amino-acid chain: Elongation factor P (189 aa).

This sequence belongs to the elongation factor P family.

Its subcellular location is the cytoplasm. It participates in protein biosynthesis; polypeptide chain elongation. Functionally, involved in peptide bond synthesis. Stimulates efficient translation and peptide-bond synthesis on native or reconstituted 70S ribosomes in vitro. Probably functions indirectly by altering the affinity of the ribosome for aminoacyl-tRNA, thus increasing their reactivity as acceptors for peptidyl transferase. This chain is Elongation factor P, found in Xanthobacter autotrophicus (strain ATCC BAA-1158 / Py2).